We begin with the raw amino-acid sequence, 313 residues long: tRNA dimethylallyltransferase (313 aa).

Gly-9–Thr-16 provides a ligand contact to ATP. Thr-11–Thr-16 lines the substrate pocket. The interaction with substrate tRNA stretch occupies residues Asp-34–Gln-37.

The protein belongs to the IPP transferase family. Monomer. It depends on Mg(2+) as a cofactor.

It carries out the reaction adenosine(37) in tRNA + dimethylallyl diphosphate = N(6)-dimethylallyladenosine(37) in tRNA + diphosphate. In terms of biological role, catalyzes the transfer of a dimethylallyl group onto the adenine at position 37 in tRNAs that read codons beginning with uridine, leading to the formation of N6-(dimethylallyl)adenosine (i(6)A). In Acetivibrio thermocellus (strain ATCC 27405 / DSM 1237 / JCM 9322 / NBRC 103400 / NCIMB 10682 / NRRL B-4536 / VPI 7372) (Clostridium thermocellum), this protein is tRNA dimethylallyltransferase.